A 265-amino-acid polypeptide reads, in one-letter code: Undecaprenyl-diphosphatase (265 aa).

The next 8 membrane-spanning stretches (helical) occupy residues 1-21 (MDIF…FLPI), 39-59 (QGVG…VLYF), 84-104 (ALAW…LALL), 114-134 (ASVI…ADWL), 144-164 (LNWK…VPGT), 187-207 (FSFL…LLEV), 218-238 (GFLI…HFFL), and 244-264 (VGMW…YAVL).

The protein belongs to the UppP family.

It localises to the cell inner membrane. It carries out the reaction di-trans,octa-cis-undecaprenyl diphosphate + H2O = di-trans,octa-cis-undecaprenyl phosphate + phosphate + H(+). Functionally, catalyzes the dephosphorylation of undecaprenyl diphosphate (UPP). Confers resistance to bacitracin. The sequence is that of Undecaprenyl-diphosphatase from Marinobacter nauticus (strain ATCC 700491 / DSM 11845 / VT8) (Marinobacter aquaeolei).